The primary structure comprises 301 residues: Probable alpha-L-glutamate ligase (301 aa).

The 184-residue stretch at 104-287 folds into the ATP-grasp domain; sequence MQLLSRKGIG…VAGLIVDFIE (184 aa). ATP-binding positions include Lys-141, 178-179, Asp-187, and 211-213; these read EF and RSN. Mg(2+) contacts are provided by Asp-248, Glu-260, and Asn-262. Residues Asp-248, Glu-260, and Asn-262 each contribute to the Mn(2+) site.

The protein belongs to the RimK family. Requires Mg(2+) as cofactor. Mn(2+) serves as cofactor.

The chain is Probable alpha-L-glutamate ligase from Aliivibrio salmonicida (strain LFI1238) (Vibrio salmonicida (strain LFI1238)).